A 225-amino-acid polypeptide reads, in one-letter code: PKHD-type hydroxylase YbiX (225 aa).

Residues 78–177 (TLSTPLFNRY…RVASFMWIQS (100 aa)) enclose the Fe2OG dioxygenase domain. Residues histidine 96, aspartate 98, and histidine 158 each contribute to the Fe cation site. Arginine 168 provides a ligand contact to 2-oxoglutarate.

The cofactor is Fe(2+). L-ascorbate is required as a cofactor.

This Escherichia coli O7:K1 (strain IAI39 / ExPEC) protein is PKHD-type hydroxylase YbiX.